The primary structure comprises 203 residues: LexA repressor 2 (203 aa).

Positions methionine 28–glutamate 48 form a DNA-binding region, H-T-H motif. Residues serine 122 and lysine 159 each act as for autocatalytic cleavage activity in the active site.

This sequence belongs to the peptidase S24 family. As to quaternary structure, homodimer.

It catalyses the reaction Hydrolysis of Ala-|-Gly bond in repressor LexA.. In terms of biological role, represses a number of genes involved in the response to DNA damage (SOS response), including recA and lexA. In the presence of single-stranded DNA, RecA interacts with LexA causing an autocatalytic cleavage which disrupts the DNA-binding part of LexA, leading to derepression of the SOS regulon and eventually DNA repair. The chain is LexA repressor 2 from Geobacter sulfurreducens (strain ATCC 51573 / DSM 12127 / PCA).